Here is a 355-residue protein sequence, read N- to C-terminus: 3-isopropylmalate dehydrogenase (355 aa).

Residues Arg98, Arg108, Arg132, and Asp223 each coordinate substrate. Positions 223, 247, and 251 each coordinate Mg(2+). Residue 283-295 (GSAPDIAGQQKAD) coordinates NAD(+).

This sequence belongs to the isocitrate and isopropylmalate dehydrogenases family. LeuB type 2 subfamily. Homodimer. Requires Mg(2+) as cofactor. The cofactor is Mn(2+).

Its subcellular location is the cytoplasm. It catalyses the reaction (2R,3S)-3-isopropylmalate + NAD(+) = 4-methyl-2-oxopentanoate + CO2 + NADH. Its pathway is amino-acid biosynthesis; L-leucine biosynthesis; L-leucine from 3-methyl-2-oxobutanoate: step 3/4. Its function is as follows. Catalyzes the oxidation of 3-carboxy-2-hydroxy-4-methylpentanoate (3-isopropylmalate) to 3-carboxy-4-methyl-2-oxopentanoate. The product decarboxylates to 4-methyl-2 oxopentanoate. In Clavibacter sepedonicus (Clavibacter michiganensis subsp. sepedonicus), this protein is 3-isopropylmalate dehydrogenase.